The following is a 358-amino-acid chain: Dual-specificity RNA methyltransferase RlmN (358 aa).

E86 (proton acceptor) is an active-site residue. A Radical SAM core domain is found at 105-338; that stretch reads RHKRYTICVS…CTIRQSKGLD (234 aa). An intrachain disulfide couples C112 to C343. [4Fe-4S] cluster is bound by residues C119, C123, and C126. S-adenosyl-L-methionine contacts are provided by residues 169 to 170, S201, 224 to 226, and N300; these read GE and SLH. Residue C343 is the S-methylcysteine intermediate of the active site.

The protein belongs to the radical SAM superfamily. RlmN family. The cofactor is [4Fe-4S] cluster.

It is found in the cytoplasm. The catalysed reaction is adenosine(2503) in 23S rRNA + 2 reduced [2Fe-2S]-[ferredoxin] + 2 S-adenosyl-L-methionine = 2-methyladenosine(2503) in 23S rRNA + 5'-deoxyadenosine + L-methionine + 2 oxidized [2Fe-2S]-[ferredoxin] + S-adenosyl-L-homocysteine. It catalyses the reaction adenosine(37) in tRNA + 2 reduced [2Fe-2S]-[ferredoxin] + 2 S-adenosyl-L-methionine = 2-methyladenosine(37) in tRNA + 5'-deoxyadenosine + L-methionine + 2 oxidized [2Fe-2S]-[ferredoxin] + S-adenosyl-L-homocysteine. Specifically methylates position 2 of adenine 2503 in 23S rRNA and position 2 of adenine 37 in tRNAs. m2A2503 modification seems to play a crucial role in the proofreading step occurring at the peptidyl transferase center and thus would serve to optimize ribosomal fidelity. This chain is Dual-specificity RNA methyltransferase RlmN, found in Campylobacter hominis (strain ATCC BAA-381 / DSM 21671 / CCUG 45161 / LMG 19568 / NCTC 13146 / CH001A).